The primary structure comprises 443 residues: ATP-dependent protease ATPase subunit HslU (443 aa).

ATP contacts are provided by residues Ile-20, 62–67, Asp-255, Glu-321, and Arg-393; that span reads GVGKTE.

This sequence belongs to the ClpX chaperone family. HslU subfamily. A double ring-shaped homohexamer of HslV is capped on each side by a ring-shaped HslU homohexamer. The assembly of the HslU/HslV complex is dependent on binding of ATP.

Its subcellular location is the cytoplasm. Functionally, ATPase subunit of a proteasome-like degradation complex; this subunit has chaperone activity. The binding of ATP and its subsequent hydrolysis by HslU are essential for unfolding of protein substrates subsequently hydrolyzed by HslV. HslU recognizes the N-terminal part of its protein substrates and unfolds these before they are guided to HslV for hydrolysis. The protein is ATP-dependent protease ATPase subunit HslU of Helicobacter pylori (strain G27).